Consider the following 622-residue polypeptide: Chaperone protein HscA homolog (622 aa).

It belongs to the heat shock protein 70 family.

Chaperone involved in the maturation of iron-sulfur cluster-containing proteins. Has a low intrinsic ATPase activity which is markedly stimulated by HscB. The sequence is that of Chaperone protein HscA homolog from Burkholderia pseudomallei (strain K96243).